Reading from the N-terminus, the 212-residue chain is Agamous-like MADS-box protein MADS9 (212 aa).

The MADS-box domain maps to Met-1–Ser-61. A K-box domain is found at His-84–Pro-170.

As to expression, expressed during flower development in stamens and petals.

It localises to the nucleus. Its function is as follows. Probable transcription factor that may play role in specifying stamen and petal organ identity. This chain is Agamous-like MADS-box protein MADS9, found in Vitis vinifera (Grape).